The primary structure comprises 702 residues: Ribosomal RNA large subunit methyltransferase K/L (702 aa).

The THUMP domain occupies 43–154; that stretch reads LIYQSLMWSR…KETASIALDL (112 aa).

It belongs to the methyltransferase superfamily. RlmKL family.

It is found in the cytoplasm. It carries out the reaction guanosine(2445) in 23S rRNA + S-adenosyl-L-methionine = N(2)-methylguanosine(2445) in 23S rRNA + S-adenosyl-L-homocysteine + H(+). It catalyses the reaction guanosine(2069) in 23S rRNA + S-adenosyl-L-methionine = N(2)-methylguanosine(2069) in 23S rRNA + S-adenosyl-L-homocysteine + H(+). Its function is as follows. Specifically methylates the guanine in position 2445 (m2G2445) and the guanine in position 2069 (m7G2069) of 23S rRNA. The protein is Ribosomal RNA large subunit methyltransferase K/L of Salmonella gallinarum (strain 287/91 / NCTC 13346).